Here is a 1471-residue protein sequence, read N- to C-terminus: Gag-Pol polyprotein (1471 aa).

Glycine 2 is lipidated: N-myristoyl glycine; by host. The segment at 7-31 (VLSGKKTDELEKVRLRPGGKKRYCL) is interaction with Gp41. The short motif at 16 to 22 (LEKVRLR) is the Nuclear export signal element. A Nuclear localization signal motif is present at residues 26-32 (KKRYCLK). The span at 105–114 (QRHLAADTEK) shows a compositional bias: basic and acidic residues. Residues 105-130 (QRHLAADTEKMPATSRPTAPPSGGNY) form a disordered region. Phosphotyrosine; by host is present on tyrosine 130. The interaction with human PPIA/CYPA and NUP153 stretch occupies residues 186-223 (NCVGDHQAAMQIIREIINEEAADWDQQHPIPGPLPAGQ). Residues 274–360 (YNPTNILDIK…GGPGQKARLM (87 aa)) are dimerization/Multimerization of capsid protein p24. 2 CCHC-type zinc fingers span residues 388-405 (VTCW…QCRA) and 409-426 (QGCW…KCPE). Residues 441-508 (ASQLPHDPSA…PRETLQGGDR (68 aa)) form a disordered region. Positions 484–501 (DAEKLHEDGETAEREPRE) are enriched in basic and acidic residues. Residues 513–517 (PQFSL) form a dimerization of protease region. The Peptidase A2 domain occupies 533–602 (EVLLDTGADD…PINIFGRNIL (70 aa)). The active-site For protease activity; shared with dimeric partner is aspartate 537. Dimerization of protease regions lie at residues 561–567 (GIGGFIN) and 600–612 (NILN…LNFP). The Reverse transcriptase domain maps to 656–846 (GQLEEAPPTN…PFKWMGYELW (191 aa)). Aspartate 721, aspartate 796, and aspartate 797 together coordinate Mg(2+). Residues 838–846 (FKWMGYELW) form an RT 'primer grip' region. The Tryptophan repeat motif motif lies at 1008-1024 (WDQWWTDYWQVTWIPEW). An RNase H type-1 domain is found at 1044 to 1167 (LEKVETYYTD…VDHLVSQGIR (124 aa)). 4 residues coordinate Mg(2+): aspartate 1053, glutamate 1088, aspartate 1108, and aspartate 1159. Residues 1173-1214 (EKIEPAQEEHEKYHGNVKELVHKFGLPQLVAKQIVNSCDKCQ) form an Integrase-type zinc finger. Residues histidine 1182, histidine 1186, cysteine 1210, and cysteine 1213 each coordinate Zn(2+). The 152-residue stretch at 1224-1375 (VNAELGTWQM…PAERLVNMIT (152 aa)) folds into the Integrase catalytic domain. Aspartate 1234, aspartate 1286, and glutamate 1322 together coordinate Mg(2+). A DNA-binding region (integrase-type) is located at residues 1393-1440 (FQVYYREGRDQLWKGPGELLWKGEGAVLIKVGTEIKVIPRRKAKIIRH).

In terms of assembly, homotrimer; further assembles as hexamers of trimers. Interacts with gp41 (via C-terminus). Interacts with host CALM1; this interaction induces a conformational change in the Matrix protein, triggering exposure of the myristate group. Interacts with host AP3D1; this interaction allows the polyprotein trafficking to multivesicular bodies during virus assembly. Part of the pre-integration complex (PIC) which is composed of viral genome, matrix protein, Vpr and integrase. Homodimer; the homodimer further multimerizes as homohexamers or homopentamers. Interacts with human PPIA/CYPA. Interacts with human NUP153. Interacts with host PDZD8; this interaction stabilizes the capsid. Interacts with monkey TRIM5; this interaction destabilizes the capsid. As to quaternary structure, homodimer, whose active site consists of two apposed aspartic acid residues. In terms of assembly, heterodimer of p66 RT and p51 RT (RT p66/p51). Heterodimerization of RT is essential for DNA polymerase activity. The overall folding of the subdomains is similar in p66 RT and p51 RT but the spatial arrangements of the subdomains are dramatically different. Homotetramer; may further associate as a homohexadecamer. Part of the pre-integration complex (PIC) which is composed of viral genome, matrix protein, Vpr and integrase. Interacts with human SMARCB1/INI1 and human PSIP1/LEDGF isoform 1. Interacts with human KPNA3; this interaction might play a role in nuclear import of the pre-integration complex. Interacts with human NUP153; this interaction might play a role in nuclear import of the pre-integration complex. Mg(2+) is required as a cofactor. In terms of processing, specific enzymatic cleavages by the viral protease yield mature proteins. The protease is released by autocatalytic cleavage. The polyprotein is cleaved during and after budding, this process is termed maturation. Proteolytic cleavage of p66 RT removes the RNase H domain to yield the p51 RT subunit. Nucleocapsid protein p7 might be further cleaved after virus entry.

The protein resides in the host cell membrane. Its subcellular location is the host endosome. It is found in the host multivesicular body. It localises to the virion membrane. The protein localises to the host nucleus. The protein resides in the host cytoplasm. Its subcellular location is the virion. The catalysed reaction is Endopeptidase for which the P1 residue is preferably hydrophobic.. It catalyses the reaction Endohydrolysis of RNA in RNA/DNA hybrids. Three different cleavage modes: 1. sequence-specific internal cleavage of RNA. Human immunodeficiency virus type 1 and Moloney murine leukemia virus enzymes prefer to cleave the RNA strand one nucleotide away from the RNA-DNA junction. 2. RNA 5'-end directed cleavage 13-19 nucleotides from the RNA end. 3. DNA 3'-end directed cleavage 15-20 nucleotides away from the primer terminus.. The enzyme catalyses 3'-end directed exonucleolytic cleavage of viral RNA-DNA hybrid.. It carries out the reaction DNA(n) + a 2'-deoxyribonucleoside 5'-triphosphate = DNA(n+1) + diphosphate. Its activity is regulated as follows. Protease: The viral protease is inhibited by many synthetic protease inhibitors (PIs), such as amprenavir, atazanavir, indinavir, loprinavir, nelfinavir, ritonavir and saquinavir. Use of protease inhibitors in tritherapy regimens permit more ambitious therapeutic strategies. Reverse transcriptase/ribonuclease H: RT can be inhibited either by nucleoside RT inhibitors (NRTIs) or by non nucleoside RT inhibitors (NNRTIs). NRTIs act as chain terminators, whereas NNRTIs inhibit DNA polymerization by binding a small hydrophobic pocket near the RT active site and inducing an allosteric change in this region. Classical NRTIs are abacavir, adefovir (PMEA), didanosine (ddI), lamivudine (3TC), stavudine (d4T), tenofovir (PMPA), zalcitabine (ddC), and zidovudine (AZT). Classical NNRTIs are atevirdine (BHAP U-87201E), delavirdine, efavirenz (DMP-266), emivirine (I-EBU), and nevirapine (BI-RG-587). The tritherapies used as a basic effective treatment of AIDS associate two NRTIs and one NNRTI. Functionally, mediates, with Gag polyprotein, the essential events in virion assembly, including binding the plasma membrane, making the protein-protein interactions necessary to create spherical particles, recruiting the viral Env proteins, and packaging the genomic RNA via direct interactions with the RNA packaging sequence (Psi). Gag-Pol polyprotein may regulate its own translation, by the binding genomic RNA in the 5'-UTR. At low concentration, the polyprotein would promote translation, whereas at high concentration, the polyprotein would encapsidate genomic RNA and then shut off translation. In terms of biological role, targets the polyprotein to the plasma membrane via a multipartite membrane-binding signal, that includes its myristoylated N-terminus. Matrix protein is part of the pre-integration complex. Implicated in the release from host cell mediated by Vpu. Binds to RNA. Its function is as follows. Forms the conical core that encapsulates the genomic RNA-nucleocapsid complex in the virion. Most core are conical, with only 7% tubular. The core is constituted by capsid protein hexamer subunits. The core is disassembled soon after virion entry. Host restriction factors such as TRIM5-alpha or TRIMCyp bind retroviral capsids and cause premature capsid disassembly, leading to blocks in reverse transcription. Capsid restriction by TRIM5 is one of the factors which restricts HIV-1 to the human species. Host PIN1 apparently facilitates the virion uncoating. On the other hand, interactions with PDZD8 or CYPA stabilize the capsid. Encapsulates and protects viral dimeric unspliced genomic RNA (gRNA). Binds these RNAs through its zinc fingers. Acts as a nucleic acid chaperone which is involved in rearangement of nucleic acid secondary structure during gRNA retrotranscription. Also facilitates template switch leading to recombination. As part of the polyprotein, participates in gRNA dimerization, packaging, tRNA incorporation and virion assembly. Functionally, aspartyl protease that mediates proteolytic cleavages of Gag and Gag-Pol polyproteins during or shortly after the release of the virion from the plasma membrane. Cleavages take place as an ordered, step-wise cascade to yield mature proteins. This process is called maturation. Displays maximal activity during the budding process just prior to particle release from the cell. Also cleaves Nef and Vif, probably concomitantly with viral structural proteins on maturation of virus particles. Hydrolyzes host EIF4GI and PABP1 in order to shut off the capped cellular mRNA translation. The resulting inhibition of cellular protein synthesis serves to ensure maximal viral gene expression and to evade host immune response. In terms of biological role, multifunctional enzyme that converts the viral RNA genome into dsDNA in the cytoplasm, shortly after virus entry into the cell. This enzyme displays a DNA polymerase activity that can copy either DNA or RNA templates, and a ribonuclease H (RNase H) activity that cleaves the RNA strand of RNA-DNA heteroduplexes in a partially processive 3' to 5' endonucleasic mode. Conversion of viral genomic RNA into dsDNA requires many steps. A tRNA(3)-Lys binds to the primer-binding site (PBS) situated at the 5'-end of the viral RNA. RT uses the 3' end of the tRNA primer to perform a short round of RNA-dependent minus-strand DNA synthesis. The reading proceeds through the U5 region and ends after the repeated (R) region which is present at both ends of viral RNA. The portion of the RNA-DNA heteroduplex is digested by the RNase H, resulting in a ssDNA product attached to the tRNA primer. This ssDNA/tRNA hybridizes with the identical R region situated at the 3' end of viral RNA. This template exchange, known as minus-strand DNA strong stop transfer, can be either intra- or intermolecular. RT uses the 3' end of this newly synthesized short ssDNA to perform the RNA-dependent minus-strand DNA synthesis of the whole template. RNase H digests the RNA template except for two polypurine tracts (PPTs) situated at the 5'-end and near the center of the genome. It is not clear if both polymerase and RNase H activities are simultaneous. RNase H probably can proceed both in a polymerase-dependent (RNA cut into small fragments by the same RT performing DNA synthesis) and a polymerase-independent mode (cleavage of remaining RNA fragments by free RTs). Secondly, RT performs DNA-directed plus-strand DNA synthesis using the PPTs that have not been removed by RNase H as primers. PPTs and tRNA primers are then removed by RNase H. The 3' and 5' ssDNA PBS regions hybridize to form a circular dsDNA intermediate. Strand displacement synthesis by RT to the PBS and PPT ends produces a blunt ended, linear dsDNA copy of the viral genome that includes long terminal repeats (LTRs) at both ends. Its function is as follows. Catalyzes viral DNA integration into the host chromosome, by performing a series of DNA cutting and joining reactions. This enzyme activity takes place after virion entry into a cell and reverse transcription of the RNA genome in dsDNA. The first step in the integration process is 3' processing. This step requires a complex comprising the viral genome, matrix protein, Vpr and integrase. This complex is called the pre-integration complex (PIC). The integrase protein removes 2 nucleotides from each 3' end of the viral DNA, leaving recessed CA OH's at the 3' ends. In the second step, the PIC enters cell nucleus. This process is mediated through integrase and Vpr proteins, and allows the virus to infect a non dividing cell. This ability to enter the nucleus is specific of lentiviruses, other retroviruses cannot and rely on cell division to access cell chromosomes. In the third step, termed strand transfer, the integrase protein joins the previously processed 3' ends to the 5' ends of strands of target cellular DNA at the site of integration. The 5'-ends are produced by integrase-catalyzed staggered cuts, 5 bp apart. A Y-shaped, gapped, recombination intermediate results, with the 5'-ends of the viral DNA strands and the 3' ends of target DNA strands remaining unjoined, flanking a gap of 5 bp. The last step is viral DNA integration into host chromosome. This involves host DNA repair synthesis in which the 5 bp gaps between the unjoined strands are filled in and then ligated. Since this process occurs at both cuts flanking the HIV genome, a 5 bp duplication of host DNA is produced at the ends of HIV-1 integration. Alternatively, Integrase may catalyze the excision of viral DNA just after strand transfer, this is termed disintegration. This is Gag-Pol polyprotein (gag-pol) from Human immunodeficiency virus type 2 subtype B (isolate UC1) (HIV-2).